Consider the following 187-residue polypeptide: Protein Flattop (187 aa).

Positions 97–187 (THSGHGIHTH…TPQLEREEPQ (91 aa)) are disordered. Polar residues predominate over residues 122–131 (EGDQTCNAPT). Positions 169 to 187 (KRREQSLEETPQLEREEPQ) are enriched in basic and acidic residues.

It belongs to the Flattop family.

Its subcellular location is the cytoplasm. It is found in the cytoskeleton. The protein resides in the cilium basal body. The protein localises to the cell projection. It localises to the cilium. Its subcellular location is the apical cell membrane. It is found in the cilium axoneme. Its function is as follows. Microtubule inner protein (MIP) part of the dynein-decorated doublet microtubules (DMTs) in cilia axoneme. Acts as a regulator of cilium basal body docking and positioning in mono- and multiciliated cells. Regulates basal body docking and cilia formation in multiciliated lung cells. Regulates kinocilium positioning and stereocilia bundle morphogenesis in the inner ear. The chain is Protein Flattop from Salmo salar (Atlantic salmon).